The primary structure comprises 424 residues: Enolase (424 aa).

A (2R)-2-phosphoglycerate-binding site is contributed by glutamine 165. The active-site Proton donor is glutamate 207. Positions 244, 283, and 310 each coordinate Mg(2+). Lysine 335, arginine 364, serine 365, and lysine 386 together coordinate (2R)-2-phosphoglycerate. Lysine 335 acts as the Proton acceptor in catalysis.

Belongs to the enolase family. It depends on Mg(2+) as a cofactor.

The protein localises to the cytoplasm. The protein resides in the secreted. It is found in the cell surface. The enzyme catalyses (2R)-2-phosphoglycerate = phosphoenolpyruvate + H2O. It participates in carbohydrate degradation; glycolysis; pyruvate from D-glyceraldehyde 3-phosphate: step 4/5. In terms of biological role, catalyzes the reversible conversion of 2-phosphoglycerate (2-PG) into phosphoenolpyruvate (PEP). It is essential for the degradation of carbohydrates via glycolysis. The sequence is that of Enolase from Chlamydia trachomatis serovar D (strain ATCC VR-885 / DSM 19411 / UW-3/Cx).